A 469-amino-acid polypeptide reads, in one-letter code: Properdin (469 aa).

Residues Met-1–Ser-27 form the signal peptide. TSP type-1 domains are found at residues Asp-28–Arg-76, Ser-77–Pro-134, Met-136–Pro-191, His-193–Pro-255, Ala-257–Pro-313, Asp-315–Pro-377, and Lys-379–Lys-462. 3 cysteine pairs are disulfide-bonded: Cys-32–Cys-56, Cys-43–Cys-72, and Cys-57–Cys-75. C-linked (Man) tryptophan glycosylation is found at Trp-83 and Trp-86. 7 cysteine pairs are disulfide-bonded: Cys-89–Cys-127, Cys-93–Cys-133, Cys-104–Cys-111, Cys-132–Cys-170, Cys-148–Cys-184, Cys-152–Cys-190, and Cys-163–Cys-174. Trp-139, Trp-142, and Trp-145 each carry a C-linked (Man) tryptophan glycan. Thr-151 is a glycosylation site (O-linked (Fuc...) threonine). 3 C-linked (Man) tryptophan glycosylation sites follow: Trp-196, Trp-199, and Trp-202. Disulfide bonds link Cys-205–Cys-248, Cys-209–Cys-254, and Cys-224–Cys-238. A glycan (O-linked (Fuc...) serine) is linked at Ser-208. Positions Glu-218–Cys-238 are disordered. 2 C-linked (Man) tryptophan glycosylation sites follow: Trp-260 and Trp-263. Disulfide bonds link Cys-269–Cys-306, Cys-273–Cys-312, and Cys-284–Cys-296. Thr-272 carries O-linked (Fuc...) threonine glycosylation. Residues Trp-321 and Trp-324 are each glycosylated (C-linked (Man) tryptophan). Disulfide bonds link Cys-327–Cys-370, Cys-337–Cys-376, and Cys-350–Cys-360. The interaction with Complement C3 beta chain stretch occupies residues Lys-351–Arg-359. 3 C-linked (Man) tryptophan glycosylation sites follow: Trp-382, Trp-385, and Trp-388. 3 disulfides stabilise this stretch: Cys-391–Cys-455, Cys-395–Cys-461, and Cys-407–Cys-439. N-linked (GlcNAc...) asparagine glycosylation occurs at Asn-428.

In plasma, properdin exists as dimers, trimers or tetramers in the relative proportions of 26:54:20. Interacts with the pro-C3-convertase enzyme complex (C3b-Bb) comprised of Complement C3 beta chain (C3b) and the Complement factor B Bb fragment (Bb), where it binds (via its TSP type-1 5 domain) with C3b and Bb. This interaction stabilizes the complex and allows it to become the active C3-convertase enzyme complex (C3b-Bb-FP). Interacts with C3b. Interacts with CFB.

It is found in the secreted. A positive regulator of the alternate pathway of complement. It binds to and stabilizes the C3- and C5-convertase enzyme complexes. Inhibits CFI-CFH mediated degradation of Inhibits CFI-CFH mediated degradation of Complement C3 beta chain (C3b). The sequence is that of Properdin (CFP) from Pongo abelii (Sumatran orangutan).